Consider the following 203-residue polypeptide: Thymidylate kinase (203 aa).

An ATP-binding site is contributed by 10 to 17; it reads GIDGCGKT.

Belongs to the thymidylate kinase family.

It catalyses the reaction dTMP + ATP = dTDP + ADP. In terms of biological role, phosphorylation of dTMP to form dTDP in both de novo and salvage pathways of dTTP synthesis. In Thermoanaerobacter pseudethanolicus (strain ATCC 33223 / 39E) (Clostridium thermohydrosulfuricum), this protein is Thymidylate kinase.